The chain runs to 269 residues: tRNA pseudouridine synthase A (269 aa).

Catalysis depends on Asp-51, which acts as the Nucleophile. Tyr-109 provides a ligand contact to substrate.

It belongs to the tRNA pseudouridine synthase TruA family. As to quaternary structure, homodimer.

It carries out the reaction uridine(38/39/40) in tRNA = pseudouridine(38/39/40) in tRNA. Functionally, formation of pseudouridine at positions 38, 39 and 40 in the anticodon stem and loop of transfer RNAs. This Haemophilus influenzae (strain ATCC 51907 / DSM 11121 / KW20 / Rd) protein is tRNA pseudouridine synthase A.